We begin with the raw amino-acid sequence, 367 residues long: Diphthine methyltransferase homolog (367 aa).

WD repeat units follow at residues 84–124 (NFNS…KKLE), 132–173 (SLSN…SKVT), 180–220 (AHDY…NHND), and 234–274 (RCDM…QPII).

It belongs to the DPH7 family.

The enzyme catalyses diphthine methyl ester-[translation elongation factor 2] + H2O = diphthine-[translation elongation factor 2] + methanol + H(+). It participates in protein modification; peptidyl-diphthamide biosynthesis. In terms of biological role, catalyzes the demethylation of diphthine methyl ester to form diphthine, an intermediate diphthamide biosynthesis, a post-translational modification of histidine which occurs in translation elongation factor 2 (efbA). This chain is Diphthine methyltransferase homolog (wdr85), found in Dictyostelium discoideum (Social amoeba).